We begin with the raw amino-acid sequence, 147 residues long: Large ribosomal subunit protein bL9 (147 aa).

This sequence belongs to the bacterial ribosomal protein bL9 family.

In terms of biological role, binds to the 23S rRNA. This is Large ribosomal subunit protein bL9 from Thermodesulfovibrio yellowstonii (strain ATCC 51303 / DSM 11347 / YP87).